Reading from the N-terminus, the 337-residue chain is Trace amine-associated receptor 5 (337 aa).

The Extracellular segment spans residues 1 to 38 (MRAVLLPGSGEQPAAFCYQVNGSCPRTVHPLAIRVLIY). Asparagine 21 is a glycosylation site (N-linked (GlcNAc...) asparagine). 2 disulfide bridges follow: cysteine 24–cysteine 188 and cysteine 99–cysteine 192. A helical membrane pass occupies residues 39-59 (LACAVGMLITVLGNLFVVFAV). The Cytoplasmic portion of the chain corresponds to 60–70 (SYFKVLHTPTN). A helical transmembrane segment spans residues 71–91 (FLLLSLALADMLLGLLVLPLS). Topologically, residues 92–109 (TVRSVESCWFFGDFLCRL) are extracellular. A helical membrane pass occupies residues 110–130 (HTYLDTLFCLTSIFHLCFISI). The Cytoplasmic portion of the chain corresponds to 131-154 (DRHCAICDPLLYPSKFTVRIALRY). Residues 155-175 (IAAGWGIPAAYTAFFLYTDVV) traverse the membrane as a helical segment. An extracellular Loop 2 (ECL2) region spans residues 176–189 (ERALSQWLEEMPCV). Residues 176–204 (ERALSQWLEEMPCVGSCQLLFNKFWGWLN) lie on the Extracellular side of the membrane. Residues 205–225 (FPAFFIPCLIMISLYLKIFVV) traverse the membrane as a helical segment. The Cytoplasmic segment spans residues 226–253 (ATRQAQQIRTLSQSLSGAVKRERKAAKT). Residues 254 to 274 (LGIAVGIYLVCWLPFTVDTLV) traverse the membrane as a helical segment. The Extracellular portion of the chain corresponds to 275 to 284 (DSLLNFVTPP). The helical transmembrane segment at 285 to 307 (LVFDIFIWFAYFNSACNPIIYVF) threads the bilayer. The Cytoplasmic segment spans residues 308 to 337 (SYRWFRKALKLLLSREILSPRTQTADLFHD).

The protein belongs to the G-protein coupled receptor 1 family.

It is found in the cell membrane. In terms of biological role, olfactory receptor specific for trimethylamine, a trace amine enriched in the urine of male rats, playing a role in social behavior. Also activated by N-methylpiperidine. Trimethylamine is present at high concentration in the urine of male after puberty and acts as an attractant. Trimethylamine-binding causes a conformation change that triggers signaling via G(s)-class of G alpha proteins (GNAL or GNAS). Also required to provide olfactory input into limbic brain areas to regulate emotional behaviors likely via modulation of the serotonin system. The polypeptide is Trace amine-associated receptor 5 (Rattus norvegicus (Rat)).